The following is a 1038-amino-acid chain: Protein transport protein SEC24 A (1038 aa).

A disordered region spans residues 1-247 (MGTENQGYPN…PPHTGGFAQR (247 aa)). Over residues 22–33 (SAPPPGIPPQSG) the composition is skewed to pro residues. Residues Cys371, Cys374, Cys393, and Cys396 each contribute to the Zn(2+) site. Residues 371-396 (CRRCRTYVNPFVTFTDSGRKWRCNIC) are zinc finger-like.

The protein belongs to the SEC23/SEC24 family. SEC24 subfamily. In terms of assembly, component of the coat protein complex II (COPII), composed of at least five proteins: the Sec23/24 complex, the Sec13/31 complex and Sar1. Interacts with SEC221, SEC23E/SEC23A, SEC23B, SEC23G/SEC23C and SEC23F/SEC23D. As to quaternary structure, (Microbial infection) Interacts with turnip mosaic virus (TuMV) 6K2 in COPII-coated vesicles. Mainly expressed in pollen, leaves, inflorescences, roots and stems, and, to a lower extent, in cotyledons, petioles and hypocotyls.

It localises to the cytoplasmic vesicle. It is found in the COPII-coated vesicle membrane. Its subcellular location is the endoplasmic reticulum membrane. The protein resides in the golgi apparatus membrane. The protein localises to the cytoplasm. It localises to the cytosol. In terms of biological role, essential protein. Component of the coat protein complex II (COPII), that covers ER-derived vesicles involved in transport from the endoplasmic reticulum to the Golgi apparatus. COPII is composed of at least five proteins: the SEC23/24 complex, the SEC13/31 complex, and the protein SAR1. Acts in the cytoplasm to promote the transport of secretory, plasma membrane, and vacuolar proteins from the endoplasmic reticulum to the Golgi complex. Involved in maintaining the dynamic identity of organelles of the early secretory pathway. Regulates cell size patterning, and prevents CDKA;1-, DEK1- and ACR4-dependent endoreduplication and giant cells formation in sepals. Required for male gametophytes (pollen grains) development and transmission. (Microbial infection) Contributes to viral systemic infection of turnip mosaic virus (TuMV) by triggering the formation of host endoplasmic reticulum (ER)-derived viral vesicles that carry the viral RNA (vRNA) to plasmodesmata for cell-to-cell viral movement. The protein is Protein transport protein SEC24 A of Arabidopsis thaliana (Mouse-ear cress).